The following is a 500-amino-acid chain: Intracellular exo-alpha-(1-&gt;5)-L-arabinofuranosidase (500 aa).

Residues glutamate 28, asparagine 73, and asparagine 173 each coordinate alpha-L-arabinofuranose. Glutamate 174 (proton donor/acceptor) is an active-site residue. Tyrosine 245, glutamate 293, and glutamine 350 together coordinate alpha-L-arabinofuranose. The Nucleophile role is filled by glutamate 293.

The protein belongs to the glycosyl hydrolase 51 family. In terms of assembly, homohexamer; trimer of dimers.

The protein localises to the cytoplasm. It catalyses the reaction Hydrolysis of terminal non-reducing alpha-L-arabinofuranoside residues in alpha-L-arabinosides.. It participates in glycan metabolism; L-arabinan degradation. Involved in the degradation of arabinan and is a key enzyme in the complete degradation of the plant cell wall. Catalyzes the cleavage of terminal alpha-(1-&gt;5)-arabinofuranosyl bonds in different hemicellulosic homopolysaccharides (branched and debranched arabinans). This is Intracellular exo-alpha-(1-&gt;5)-L-arabinofuranosidase (abfA) from Halalkalibacterium halodurans (strain ATCC BAA-125 / DSM 18197 / FERM 7344 / JCM 9153 / C-125) (Bacillus halodurans).